The following is a 463-amino-acid chain: MSEVINLSLSQRANHLSAHLYNNQEAHLPYSKTATVDYDNSVFLSTSKNPNGTVNYSPRSLNYDLTRGYGSLGKYEYYESKADILGQYEVIQTGEKMDKNEYQKALDKGMNKSNTLNVNNTKYWTDYNKLIYSPKSLNQLNNWEYKPHDFGINRSFPNLKFDTFNKGKEEYHQYSEDSLENFRNTLEQCDLIQGVNLISELDSAWGGFTNELLVDLKDEFFNNGINSKYNIWVHGLINHNLNPKLNQLYSRINSIIELSFNSTLFFPMNLNSSSECLGVKMSVIEDELLRGFDKRNIVNEIKIHKNKQASNDFGMVDIDRANLYNLVDNIKIKDKPDSIDLSLSDSKNSKYFAKSYIIPNDQSLAESLNKKENFPINIYKNNRINDILNNDTFPNILEDKSVYSEFSSSNTLKNDLKFYREVIKRSRENEVIEDKFELIEKISELIEEYTIGYDESDEEYDSN.

It belongs to the misato family.

It is found in the mitochondrion. Involved in the partitioning of the mitochondrial organelle and mitochondrial DNA (mtDNA) inheritance. The sequence is that of Protein DML1 (DML1) from Debaryomyces hansenii (strain ATCC 36239 / CBS 767 / BCRC 21394 / JCM 1990 / NBRC 0083 / IGC 2968) (Yeast).